Consider the following 235-residue polypeptide: Orotidine 5'-phosphate decarboxylase (235 aa).

Substrate contacts are provided by residues aspartate 16, lysine 38, 65–74 (DLKLHDIGNT), threonine 120, arginine 181, glutamine 190, glycine 210, and arginine 211. Catalysis depends on lysine 67, which acts as the Proton donor.

It belongs to the OMP decarboxylase family. Type 1 subfamily. As to quaternary structure, homodimer.

The enzyme catalyses orotidine 5'-phosphate + H(+) = UMP + CO2. Its pathway is pyrimidine metabolism; UMP biosynthesis via de novo pathway; UMP from orotate: step 2/2. Its function is as follows. Catalyzes the decarboxylation of orotidine 5'-monophosphate (OMP) to uridine 5'-monophosphate (UMP). The chain is Orotidine 5'-phosphate decarboxylase from Rhodopseudomonas palustris (strain BisA53).